The sequence spans 87 residues: Acyl carrier protein TtuC (87 aa).

In terms of domain architecture, Carrier spans 11–87 (ITAEDVQQWL…HALSQFIAAK (77 aa)). S48 carries the O-(pantetheine 4'-phosphoryl)serine modification.

Requires pantetheine 4'-phosphate as cofactor.

Functionally, carrier protein likely involved in the biosynthesis of a polyyne metabolite. Accepts as substrate the activated form of decanoic acid from TtuA. This chain is Acyl carrier protein TtuC, found in Teredinibacter turnerae (strain ATCC 39867 / T7901).